Consider the following 473-residue polypeptide: Photosystem II CP43 reaction center protein (473 aa).

Positions 1-14 (MKTLYSLRRFYHVE) are excised as a propeptide. Residue Thr-15 is modified to N-acetylthreonine. Thr-15 is modified (phosphothreonine). Transmembrane regions (helical) follow at residues 69 to 93 (LFEVAHFVPEKPMYEQGLILLPHLA), 134 to 155 (LLGPETLEESFPFFGYVWKDRN), 178 to 200 (KALYFGGVYDTWAPGGGDVRKIT), 255 to 275 (KPFAWARRAFVWSGEAYLSYS), and 291 to 312 (WFNNTAYPSEFYGPTGPEASQA). Glu-367 is a binding site for [CaMn4O5] cluster. Residues 447–471 (RARAAAAGFEKGIDRDFEPVLSMTP) traverse the membrane as a helical segment.

The protein belongs to the PsbB/PsbC family. PsbC subfamily. In terms of assembly, PSII is composed of 1 copy each of membrane proteins PsbA, PsbB, PsbC, PsbD, PsbE, PsbF, PsbH, PsbI, PsbJ, PsbK, PsbL, PsbM, PsbT, PsbX, PsbY, PsbZ, Psb30/Ycf12, at least 3 peripheral proteins of the oxygen-evolving complex and a large number of cofactors. It forms dimeric complexes. Binds multiple chlorophylls and provides some of the ligands for the Ca-4Mn-5O cluster of the oxygen-evolving complex. It may also provide a ligand for a Cl- that is required for oxygen evolution. PSII binds additional chlorophylls, carotenoids and specific lipids. serves as cofactor.

The protein localises to the plastid. Its subcellular location is the chloroplast thylakoid membrane. Its function is as follows. One of the components of the core complex of photosystem II (PSII). It binds chlorophyll and helps catalyze the primary light-induced photochemical processes of PSII. PSII is a light-driven water:plastoquinone oxidoreductase, using light energy to abstract electrons from H(2)O, generating O(2) and a proton gradient subsequently used for ATP formation. This chain is Photosystem II CP43 reaction center protein, found in Chloranthus spicatus (Chulantree).